We begin with the raw amino-acid sequence, 703 residues long: Prolyl 3-hydroxylase 2 (703 aa).

An N-terminal signal peptide occupies residues 1-21 (MRESTWVSLLLLLLLPTPQRG). The disordered stretch occupies residues 17-40 (TPQRGGPQDGRRSPEPEPERGPLQ). Basic and acidic residues predominate over residues 25-36 (DGRRSPEPEPER). TPR repeat units follow at residues 42-75 (FDLL…HRRL), 144-177 (RVPY…NPEH), 205-238 (HLES…YFNE), and 301-334 (PLHY…HPDN). N-linked (GlcNAc...) asparagine glycans are attached at residues Asn-444 and Asn-544. In terms of domain architecture, Fe2OG dioxygenase spans 552–666 (THMVCRTALS…RCAVALWFTL (115 aa)). Positions 575, 577, and 647 each coordinate Fe cation. Arg-657 is a catalytic residue. Residues 700 to 703 (KDEL) carry the Prevents secretion from ER motif.

It belongs to the leprecan family. Fe cation serves as cofactor. Requires L-ascorbate as cofactor. As to expression, detected in kidney. Detected on kidney tubular cells, pancreas acinar cells, Schwann cells of the peripheral nerve in the pinna, and in tunica adventitia, the smooth muscle layer of the aortic wall (at protein level). Detected in lung, skeletal muscle and kidney. Detected in kidney glomeruli and in prehypertrophic regions of long bone from neonates. In the eye, detected in the epithelial layer of the cornea and at lower levels in the sclera at the posterior end of the eye.

The protein localises to the endoplasmic reticulum. Its subcellular location is the sarcoplasmic reticulum. The protein resides in the golgi apparatus. It carries out the reaction L-prolyl-[collagen] + 2-oxoglutarate + O2 = trans-3-hydroxy-L-prolyl-[collagen] + succinate + CO2. Functionally, prolyl 3-hydroxylase that catalyzes the post-translational formation of 3-hydroxyproline on collagens. Contributes to proline 3-hydroxylation of collagen COL4A1 and COL1A1 in tendons, the eye sclera and in the eye lens capsule. Has high activity with the type IV collagen COL4A1, and lower activity with COL1A1. Catalyzes hydroxylation of the first Pro in Gly-Pro-Hyp sequences where Hyp is 4-hydroxyproline. Has no activity on substrates that have proline instead of 4-hydroxyproline in the third position. The chain is Prolyl 3-hydroxylase 2 from Mus musculus (Mouse).